The following is an 87-amino-acid chain: Class II metallothionein-like protein 1A (87 aa).

This sequence belongs to the metallothionein superfamily. Type 15 family. As to expression, expressed in developing seeds.

Metallothioneins have a high content of cysteine residues that bind various heavy metals. The sequence is that of Class II metallothionein-like protein 1A (MT21A) from Oryza sativa subsp. japonica (Rice).